Reading from the N-terminus, the 98-residue chain is NADH-ubiquinone oxidoreductase chain 4L (98 aa).

A run of 3 helical transmembrane segments spans residues 1–21, 29–49, and 61–81; these read MSLT…GLLM, SLLC…VIIL, and IILL…LVMV.

The protein belongs to the complex I subunit 4L family. As to quaternary structure, core subunit of respiratory chain NADH dehydrogenase (Complex I) which is composed of 45 different subunits.

The protein resides in the mitochondrion inner membrane. The catalysed reaction is a ubiquinone + NADH + 5 H(+)(in) = a ubiquinol + NAD(+) + 4 H(+)(out). In terms of biological role, core subunit of the mitochondrial membrane respiratory chain NADH dehydrogenase (Complex I) which catalyzes electron transfer from NADH through the respiratory chain, using ubiquinone as an electron acceptor. Part of the enzyme membrane arm which is embedded in the lipid bilayer and involved in proton translocation. The polypeptide is NADH-ubiquinone oxidoreductase chain 4L (MT-ND4L) (Uroderma bilobatum (Tent-making bat)).